A 704-amino-acid polypeptide reads, in one-letter code: Methionine--tRNA ligase (704 aa).

The short motif at Pro17–His27 is the 'HIGH' region element. Zn(2+) is bound by residues Cys148, Cys151, Cys161, and Cys164. A 'KMSKS' region motif is present at residues Lys348–Ser352. Lys351 serves as a coordination point for ATP. The region spanning Glu603 to Lys704 is the tRNA-binding domain.

The protein belongs to the class-I aminoacyl-tRNA synthetase family. MetG type 1 subfamily. Homodimer. It depends on Zn(2+) as a cofactor.

The protein resides in the cytoplasm. It carries out the reaction tRNA(Met) + L-methionine + ATP = L-methionyl-tRNA(Met) + AMP + diphosphate. In terms of biological role, is required not only for elongation of protein synthesis but also for the initiation of all mRNA translation through initiator tRNA(fMet) aminoacylation. The sequence is that of Methionine--tRNA ligase from Leptospira borgpetersenii serovar Hardjo-bovis (strain L550).